The primary structure comprises 460 residues: Chromosomal replication initiator protein DnaA (460 aa).

The domain I, interacts with DnaA modulators stretch occupies residues 1-78; it reads MENFWQACSA…VPVEVQFVLD (78 aa). Residues 78–123 are domain II; the sequence is DPRLVAARRPAAQASVVSDRADDVPSNVLEPIPSNATDHTPRRDQS. The segment at 124-340 is domain III, AAA+ region; it reads RINTALTFDS…GALRKILAYS (217 aa). 4 residues coordinate ATP: G168, G170, K171, and T172. A domain IV, binds dsDNA region spans residues 341-460; the sequence is RFHGKDITIE…LHVLEQTLKG (120 aa).

The protein belongs to the DnaA family. As to quaternary structure, oligomerizes as a right-handed, spiral filament on DNA at oriC.

It localises to the cytoplasm. Its function is as follows. Plays an essential role in the initiation and regulation of chromosomal replication. ATP-DnaA binds to the origin of replication (oriC) to initiate formation of the DNA replication initiation complex once per cell cycle. Binds the DnaA box (a 9 base pair repeat at the origin) and separates the double-stranded (ds)DNA. Forms a right-handed helical filament on oriC DNA; dsDNA binds to the exterior of the filament while single-stranded (ss)DNA is stabiized in the filament's interior. The ATP-DnaA-oriC complex binds and stabilizes one strand of the AT-rich DNA unwinding element (DUE), permitting loading of DNA polymerase. After initiation quickly degrades to an ADP-DnaA complex that is not apt for DNA replication. Binds acidic phospholipids. The protein is Chromosomal replication initiator protein DnaA of Herminiimonas arsenicoxydans.